A 169-amino-acid polypeptide reads, in one-letter code: Ribosome maturation factor RimM (169 aa).

One can recognise a PRC barrel domain in the interval Asp94–Leu168.

It belongs to the RimM family. As to quaternary structure, binds ribosomal protein uS19.

The protein resides in the cytoplasm. Its function is as follows. An accessory protein needed during the final step in the assembly of 30S ribosomal subunit, possibly for assembly of the head region. Essential for efficient processing of 16S rRNA. May be needed both before and after RbfA during the maturation of 16S rRNA. It has affinity for free ribosomal 30S subunits but not for 70S ribosomes. The polypeptide is Ribosome maturation factor RimM (Cereibacter sphaeroides (strain ATCC 17029 / ATH 2.4.9) (Rhodobacter sphaeroides)).